A 147-amino-acid polypeptide reads, in one-letter code: Male-specific protein scotti (147 aa).

The segment at 55–93 is disordered; that stretch reads PQEPPLGVFPAQGGPNGPPRRRKKRSFYTMTKPTPPCQS. Residues 82–93 are compositionally biased toward polar residues; it reads YTMTKPTPPCQS. Asn128 carries N-linked (GlcNAc...) asparagine glycosylation.

Belongs to the male-specific scotti family. Expressed in primary spermatocytes and round spermatids. Low expression is seen in very short elongating cysts, but were detected at high levels in a few longer spermatid cysts.

In terms of biological role, post-meiotically transcribed gene that has a role in late spermiogenesis; required for actin cone progression during spermatid individualization. This chain is Male-specific protein scotti, found in Drosophila melanogaster (Fruit fly).